The chain runs to 162 residues: Calcium-binding protein 4b (162 aa).

EF-hand domains follow at residues 10-45 (ELTN…CKYP), 46-81 (NPTL…DYII), 85-120 (TCLK…SGSN), and 123-158 (QAKV…YFEI). Residues Asp23, Asn25, Asp27, Gln29, Glu34, Asp59, Asp61, Asp63, Lys65, and Glu70 each contribute to the Ca(2+) site. 5 residues coordinate Ca(2+): Asp136, Asp138, Asp140, Cys142, and Glu147.

The protein is Calcium-binding protein 4b (cbpD2) of Dictyostelium discoideum (Social amoeba).